The primary structure comprises 662 residues: Junctophilin-1 (662 aa).

At 1–640 (MTGGRFDFDD…EREANSGPNS (640 aa)) the chain is on the cytoplasmic side. 5 MORN repeats span residues 14–36 (YCGG…KGQG), 38–59 (YSGS…SGNT), 60–82 (YQGY…KWMY), 106–128 (YEGT…DGGT), and 129–151 (YQGQ…PYGM). Phosphoserine is present on residues serine 157, serine 216, and serine 220. The tract at residues 228–247 (SKSSISSKRSSVRSDAAMSR) is disordered. 2 MORN repeats span residues 281-303 (YMGE…NGMK) and 304-326 (YEGE…DGSK). The segment covering 432 to 443 (VDAKENPEEKVP) has biased composition (basic and acidic residues). A disordered region spans residues 432–634 (VDAKENPEEK…DSCPSMEREA (203 aa)). A Phosphothreonine modification is found at threonine 448. Serine 452 is subject to Phosphoserine. Threonine 461 carries the post-translational modification Phosphothreonine. A phosphoserine mark is found at serine 465, serine 469, and serine 475. Residues 584 to 599 (KPSPNKWSPPKSVTKP) are compositionally biased toward low complexity. Positions 600–614 (VAKESKAEPKAKKSE) are enriched in basic and acidic residues. A helical; Anchor for type IV membrane protein transmembrane segment spans residues 641–661 (VMIVLVMLLNIGLAILFVHFL).

This sequence belongs to the junctophilin family.

The protein resides in the cell membrane. Its subcellular location is the endoplasmic reticulum membrane. The protein localises to the sarcoplasmic reticulum membrane. In terms of biological role, junctophilins contribute to the formation of junctional membrane complexes (JMCs) which link the plasma membrane with the endoplasmic or sarcoplasmic reticulum in excitable cells. Provides a structural foundation for functional cross-talk between the cell surface and intracellular calcium release channels. JPH1 contributes to the construction of the skeletal muscle triad by linking the t-tubule (transverse-tubule) and SR (sarcoplasmic reticulum) membranes. The sequence is that of Junctophilin-1 (JPH1) from Oryctolagus cuniculus (Rabbit).